A 643-amino-acid chain; its full sequence is Threonine--tRNA ligase (643 aa).

Residues 1–61 (MPIITLPDGS…EQDATLEIIT (61 aa)) form the TGS domain. The segment at 243-534 (DHRKIGKALD…ITEEYAGFFP (292 aa)) is catalytic. Residues C334, H385, and H511 each coordinate Zn(2+).

Belongs to the class-II aminoacyl-tRNA synthetase family. As to quaternary structure, homodimer. The cofactor is Zn(2+).

It is found in the cytoplasm. The catalysed reaction is tRNA(Thr) + L-threonine + ATP = L-threonyl-tRNA(Thr) + AMP + diphosphate + H(+). In terms of biological role, catalyzes the attachment of threonine to tRNA(Thr) in a two-step reaction: L-threonine is first activated by ATP to form Thr-AMP and then transferred to the acceptor end of tRNA(Thr). Also edits incorrectly charged L-seryl-tRNA(Thr). This Haemophilus influenzae (strain PittGG) protein is Threonine--tRNA ligase.